Reading from the N-terminus, the 22-residue chain is Mu-conotoxin SxIIIA (22 aa).

3 disulfides stabilise this stretch: Cys2–Cys15, Cys3–Cys20, and Cys10–Cys21. Ala22 is modified (alanine amide).

Belongs to the conotoxin M superfamily. In terms of tissue distribution, expressed by the venom duct.

It localises to the secreted. In terms of biological role, mu-conotoxins block voltage-gated sodium channels (Nav). This synthetic toxin potently blocks rNav1.4/SCN4A (IC(50)= 7 nM). It also moderately blocks rNav1.1/SCN1A (IC(50)=370 nM), rNav1.2/SCN2A (IC(50)=1 uM), and mNav1.6/SCN6A (IC(50)=570 nM). It is noteworthy that coexpression of subunits beta-2 or beta-4 (but not beta-1 or beta-3) decrease by more that 10-fold the binding potency of the toxin to rNav1.6. It is also noteworthy that the toxin is 50-fold more potent on mouse Nav1.6 than on rat Nav1.6. In vivo, when injected intraperitoneally or subcutaneously in mice, causes motor impairment, paralysis and death. The protein is Mu-conotoxin SxIIIA of Conus striolatus (Cone snail).